A 638-amino-acid chain; its full sequence is Stress-activated protein kinase alpha (638 aa).

ANK repeat units lie at residues Y43–A72, N80–V109, D113–A146, N150–L181, F185–C214, and E219–W248. The SAM domain maps to K240–E303. The region spanning L351–R620 is the Protein kinase domain. ATP contacts are provided by residues L357–V365 and K378. The active-site Proton acceptor is D472.

The protein belongs to the protein kinase superfamily. TKL Ser/Thr protein kinase family. As to quaternary structure, interacts with F-actin. In terms of processing, autophosphorylated.

The protein localises to the cytoplasm. It localises to the cytoskeleton. The catalysed reaction is L-seryl-[protein] + ATP = O-phospho-L-seryl-[protein] + ADP + H(+). It catalyses the reaction L-threonyl-[protein] + ATP = O-phospho-L-threonyl-[protein] + ADP + H(+). May be involved in cortical F-actin organization and resistance to osmotic stress. Activated upon cell detachment, in vitro. This chain is Stress-activated protein kinase alpha (spkA-1), found in Dictyostelium discoideum (Social amoeba).